The sequence spans 835 residues: BCL11 transcription factor A (835 aa).

Positions 1 to 12 (MSRRKQGKPQHL) are enriched in basic residues. The disordered stretch occupies residues 1–41 (MSRRKQGKPQHLSKREFSPEPLEAILTDDEPDHGPLGAPEG). A required for nuclear body formation and for SUMO1 recruitment region spans residues 1-210 (MSRRKQGKPQ…SEHGSPLTPR (210 aa)). Residues 45-71 (LLTCGQCQMNFPLGDILIFIEHKRKQC) form a C2HC-type zinc finger. Zn(2+) is bound by residues Cys-48, Cys-51, His-66, and Cys-71. At Ser-86 the chain carries Phosphoserine. A Glycyl lysine isopeptide (Lys-Gly) (interchain with G-Cter in SUMO2) cross-link involves residue Lys-123. Phosphothreonine is present on Ile-162. A Glycyl lysine isopeptide (Lys-Gly) (interchain with G-Cter in SUMO2) cross-link involves residue Lys-164. The C2H2-type 1 zinc-finger motif lies at 170–193 (YTCTTCKQPFTSAWFLLQHAQNTH). A Phosphoserine modification is found at Ser-205. Position 214 is a phosphothreonine (Pro-214). Arg-271 is modified (asymmetric dimethylarginine). The segment at 323-376 (AGNTSSPPLSPGRPSPMQRLLQPFQPGSKPPFLATPPLPPLQSAPPPSQPPVKS) is disordered. A phosphoserine mark is found at Ser-332 and Ser-337. The segment covering 355–372 (LATPPLPPLQSAPPPSQP) has biased composition (pro residues). 2 C2H2-type zinc fingers span residues 377–399 (KSCE…RRSH) and 405–429 (YKCN…THMH). A compositionally biased stretch (basic residues) spans 421–430 (KRHMKTHMHK). Disordered stretches follow at residues 421 to 458 (KRHM…LVGS), 471 to 512 (KSEN…ERVD), and 572 to 619 (RSHL…GLSK). Residues 441–450 (GLSTASSPEP) show a composition bias toward polar residues. 2 positions are modified to phosphoserine: Ser-446 and Ser-447. A compositionally biased stretch (acidic residues) spans 482-506 (NGDEEEEEDDEEEEEEEEEEEEELT). Residues 574–584 (HLAEAEGHRDT) show a composition bias toward basic and acidic residues. Ser-608 is subject to Phosphoserine. A Glycyl lysine isopeptide (Lys-Gly) (interchain with G-Cter in SUMO2) cross-link involves residue Lys-620. A phosphoserine mark is found at Ser-625 and Ser-630. Lys-634 participates in a covalent cross-link: Glycyl lysine isopeptide (Lys-Gly) (interchain with G-Cter in SUMO1). Low complexity predominate over residues 682–696 (SPFASSSEHSSENGS). At Thr-701 the chain carries Phosphothreonine. A compositionally biased stretch (gly residues) spans 706 to 720 (LDGGISGRSGTGSGG). The segment at 737–835 (EGRRSDTCEY…RVLNNDIKTE (99 aa)) is DNA-binding. A C2H2-type 4 zinc finger spans residues 742 to 764 (DTCEYCGKVFKNCSNLTVHRRSH). Residues Cys-744, Cys-747, His-760, and His-764 each coordinate Zn(2+). The segment covering 764 to 773 (HTGERPYKCE) has biased composition (polar residues). Residues 765–769 (TGERP) form a disordered region. Residues 770–792 (YKCELCNYACAQSSKLTRHMKTH) form a C2H2-type 5 zinc finger. Positions 772, 775, 788, and 792 each coordinate Zn(2+). Residues 793–799 (GQVGKDV) form a disordered region. The C2H2-type 6 zinc-finger motif lies at 800–823 (YKCEICKMPFSVYSTLEKHMKKWH). The Zn(2+) site is built by Cys-802, Cys-805, His-818, and His-823.

In terms of assembly, homotetrameric; self-associates via C2HC-type zinc finger domain. Interacts with MTA2, a component of the nucleosome remodeling and deacetylase (NuRD) repressor complex. Interacts with NR2F1, PIAS3, NR2F2 and NR2F6. Interacts with TBR1. In terms of processing, sumoylated with SUMO1. Isoforms are expressed in a tissue-specific fashion. Isoforms 1, isoform 2, and isoform 3 are expressed at similar levels in testis, kidney and spleen. Isoform 1 is expressed in the stomach, and isoform 2 is expressed exclusively in the lung. Overexpression following proviral integration in hematopoietic cells results in the generation of myeloid leukemia.

The protein resides in the cytoplasm. Its subcellular location is the nucleus. Its function is as follows. Transcription factor. Associated with the BAF SWI/SNF chromatin remodeling complex. Binds to the 5'-TGACCA-3' sequence motif in regulatory regions of target genes. Involved in brain development. May play a role in hematopoiesis. Essential factor in lymphopoiesis, required for B-cell formation in fetal liver. May function as a modulator of the transcriptional repression activity of NR2F2. In Mus musculus (Mouse), this protein is BCL11 transcription factor A (Bcl11a).